Consider the following 264-residue polypeptide: Octanoyltransferase (264 aa).

The region spanning 74–262 is the BPL/LPL catalytic domain; the sequence is GTASELVWLV…AFESVFGPRQ (189 aa). Substrate contacts are provided by residues 113 to 120, 193 to 195, and 206 to 208; these read RGGEYTYH, AIG, and GIA. Cys-224 functions as the Acyl-thioester intermediate in the catalytic mechanism.

The protein belongs to the LipB family.

Its subcellular location is the cytoplasm. It catalyses the reaction octanoyl-[ACP] + L-lysyl-[protein] = N(6)-octanoyl-L-lysyl-[protein] + holo-[ACP] + H(+). Its pathway is protein modification; protein lipoylation via endogenous pathway; protein N(6)-(lipoyl)lysine from octanoyl-[acyl-carrier-protein]: step 1/2. Functionally, catalyzes the transfer of endogenously produced octanoic acid from octanoyl-acyl-carrier-protein onto the lipoyl domains of lipoate-dependent enzymes. Lipoyl-ACP can also act as a substrate although octanoyl-ACP is likely to be the physiological substrate. The protein is Octanoyltransferase of Brucella melitensis biotype 1 (strain ATCC 23456 / CCUG 17765 / NCTC 10094 / 16M).